A 356-amino-acid chain; its full sequence is Holliday junction branch migration complex subunit RuvB (356 aa).

The interval 4 to 192 (DDTTDATADE…FGFTAHMEFY (189 aa)) is large ATPase domain (RuvB-L). Residues Leu-31, Arg-32, Gly-73, Lys-76, Thr-77, Thr-78, 139-141 (EDF), Arg-182, Tyr-192, and Arg-229 each bind ATP. Residue Thr-77 participates in Mg(2+) binding. The small ATPAse domain (RuvB-S) stretch occupies residues 193 to 263 (EPHELERVIH…IAAAALKVYE (71 aa)). A head domain (RuvB-H) region spans residues 266–356 (ARGLDRLDRG…GNGQGDLFGA (91 aa)). Arg-302, Arg-321, and Arg-326 together coordinate DNA.

It belongs to the RuvB family. In terms of assembly, homohexamer. Forms an RuvA(8)-RuvB(12)-Holliday junction (HJ) complex. HJ DNA is sandwiched between 2 RuvA tetramers; dsDNA enters through RuvA and exits via RuvB. An RuvB hexamer assembles on each DNA strand where it exits the tetramer. Each RuvB hexamer is contacted by two RuvA subunits (via domain III) on 2 adjacent RuvB subunits; this complex drives branch migration. In the full resolvosome a probable DNA-RuvA(4)-RuvB(12)-RuvC(2) complex forms which resolves the HJ.

It localises to the cytoplasm. It carries out the reaction ATP + H2O = ADP + phosphate + H(+). Its function is as follows. The RuvA-RuvB-RuvC complex processes Holliday junction (HJ) DNA during genetic recombination and DNA repair, while the RuvA-RuvB complex plays an important role in the rescue of blocked DNA replication forks via replication fork reversal (RFR). RuvA specifically binds to HJ cruciform DNA, conferring on it an open structure. The RuvB hexamer acts as an ATP-dependent pump, pulling dsDNA into and through the RuvAB complex. RuvB forms 2 homohexamers on either side of HJ DNA bound by 1 or 2 RuvA tetramers; 4 subunits per hexamer contact DNA at a time. Coordinated motions by a converter formed by DNA-disengaged RuvB subunits stimulates ATP hydrolysis and nucleotide exchange. Immobilization of the converter enables RuvB to convert the ATP-contained energy into a lever motion, pulling 2 nucleotides of DNA out of the RuvA tetramer per ATP hydrolyzed, thus driving DNA branch migration. The RuvB motors rotate together with the DNA substrate, which together with the progressing nucleotide cycle form the mechanistic basis for DNA recombination by continuous HJ branch migration. Branch migration allows RuvC to scan DNA until it finds its consensus sequence, where it cleaves and resolves cruciform DNA. This is Holliday junction branch migration complex subunit RuvB from Streptomyces avermitilis (strain ATCC 31267 / DSM 46492 / JCM 5070 / NBRC 14893 / NCIMB 12804 / NRRL 8165 / MA-4680).